A 499-amino-acid polypeptide reads, in one-letter code: Lysine--tRNA ligase (499 aa).

Mg(2+) is bound by residues glutamate 410 and glutamate 417.

The protein belongs to the class-II aminoacyl-tRNA synthetase family. As to quaternary structure, homodimer. Requires Mg(2+) as cofactor.

Its subcellular location is the cytoplasm. It carries out the reaction tRNA(Lys) + L-lysine + ATP = L-lysyl-tRNA(Lys) + AMP + diphosphate. The sequence is that of Lysine--tRNA ligase (lysS) from Bacillus subtilis (strain 168).